A 331-amino-acid polypeptide reads, in one-letter code: Holliday junction branch migration complex subunit RuvB (331 aa).

The segment at 1-186 (MAKTMMQDRL…FGIVQRLEFY (186 aa)) is large ATPase domain (RuvB-L). Residues Ile-25, Arg-26, Gly-67, Lys-70, Thr-71, Thr-72, 133 to 135 (EDF), Arg-176, Tyr-186, and Arg-223 each bind ATP. Thr-71 provides a ligand contact to Mg(2+). A small ATPAse domain (RuvB-S) region spans residues 187–257 (NIADLTTIVS…IAGSALDMLA (71 aa)). The head domain (RuvB-H) stretch occupies residues 260–331 (RRGLDHLDRR…LTQMAIDQMV (72 aa)). DNA contacts are provided by Arg-296, Arg-315, and Arg-320.

Belongs to the RuvB family. In terms of assembly, homohexamer. Forms an RuvA(8)-RuvB(12)-Holliday junction (HJ) complex. HJ DNA is sandwiched between 2 RuvA tetramers; dsDNA enters through RuvA and exits via RuvB. An RuvB hexamer assembles on each DNA strand where it exits the tetramer. Each RuvB hexamer is contacted by two RuvA subunits (via domain III) on 2 adjacent RuvB subunits; this complex drives branch migration. In the full resolvosome a probable DNA-RuvA(4)-RuvB(12)-RuvC(2) complex forms which resolves the HJ.

Its subcellular location is the cytoplasm. It catalyses the reaction ATP + H2O = ADP + phosphate + H(+). The RuvA-RuvB-RuvC complex processes Holliday junction (HJ) DNA during genetic recombination and DNA repair, while the RuvA-RuvB complex plays an important role in the rescue of blocked DNA replication forks via replication fork reversal (RFR). RuvA specifically binds to HJ cruciform DNA, conferring on it an open structure. The RuvB hexamer acts as an ATP-dependent pump, pulling dsDNA into and through the RuvAB complex. RuvB forms 2 homohexamers on either side of HJ DNA bound by 1 or 2 RuvA tetramers; 4 subunits per hexamer contact DNA at a time. Coordinated motions by a converter formed by DNA-disengaged RuvB subunits stimulates ATP hydrolysis and nucleotide exchange. Immobilization of the converter enables RuvB to convert the ATP-contained energy into a lever motion, pulling 2 nucleotides of DNA out of the RuvA tetramer per ATP hydrolyzed, thus driving DNA branch migration. The RuvB motors rotate together with the DNA substrate, which together with the progressing nucleotide cycle form the mechanistic basis for DNA recombination by continuous HJ branch migration. Branch migration allows RuvC to scan DNA until it finds its consensus sequence, where it cleaves and resolves cruciform DNA. In Psychrobacter arcticus (strain DSM 17307 / VKM B-2377 / 273-4), this protein is Holliday junction branch migration complex subunit RuvB.